A 154-amino-acid polypeptide reads, in one-letter code: Protein X (154 aa).

Positions 68–117 (PCALRFTSARRMETTVNAHQFLPKVLHKRTLGLSVMSTTDLEAYFKDCLF) are mitochondrial targeting sequence.

It belongs to the orthohepadnavirus protein X family. In terms of assembly, may form homodimer. May interact with host CEBPA, CFLAR, CREB1, DDB1, E4F1, HBXIP, HSPD1/HSP60, NFKBIA, POLR2E and SMAD4. Interacts with host SMC5-SMC6 complex and induces its degradation. Interacts with host TRPC4AP; leading to prevent ubiquitination of TRPC4AP. Interacts with host PLSCR1; this interaction promotes ubiquitination and degradation of HBx and impairs HBx-mediated cell proliferation. In terms of processing, a fraction may be phosphorylated in insect cells and HepG2 cells, a human hepatoblastoma cell line. Phosphorylated in vitro by host protein kinase C or mitogen-activated protein kinase. N-acetylated in insect cells.

It is found in the host cytoplasm. The protein resides in the host nucleus. It localises to the host mitochondrion. In terms of biological role, multifunctional protein that plays a role in silencing host antiviral defenses and promoting viral transcription. Does not seem to be essential for HBV infection. May be directly involved in development of cirrhosis and liver cancer (hepatocellular carcinoma). Most of cytosolic activities involve modulation of cytosolic calcium. The effect on apoptosis is controversial depending on the cell types in which the studies have been conducted. May induce apoptosis by localizing in mitochondria and causing loss of mitochondrial membrane potential. May also modulate apoptosis by binding host CFLAR, a key regulator of the death-inducing signaling complex (DISC). Promotes viral transcription by using the host E3 ubiquitin ligase DDB1 to target the SMC5-SMC6 complex to proteasomal degradation. This host complex would otherwise bind to viral episomal DNA, and prevents its transcription. Moderately stimulates transcription of many different viral and cellular transcription elements. Promoters and enhancers stimulated by HBx contain DNA binding sites for NF-kappa-B, AP-1, AP-2, c-EBP, ATF/CREB, or the calcium-activated factor NF-AT. In Hepatitis B virus genotype D (isolate France/alpha1/1989) (HBV-D), this protein is Protein X.